A 391-amino-acid chain; its full sequence is Transforming growth factor beta-1 proprotein (391 aa).

Residues 1–18 (MDPSPLLALLLLLGAARA) form the signal peptide. Residues 19-63 (LSTCQRLDLEAAKKKRIEAVRGQILSKLRLTAPPPASETPPRPLP) form a straightjacket domain region. The interval 64 to 270 (DDVRALYNST…ALPAERANEL (207 aa)) is arm domain. 3 N-linked (GlcNAc...) asparagine glycosylation sites follow: Asn-71, Asn-126, and Asn-171. The bowtie tail stretch occupies residues 221 to 249 (EMGPGHADEMRISIEGFEQQRGDMQSIAK). The short motif at 241–243 (RGD) is the Cell attachment site element. Intrachain disulfides connect Cys-284–Cys-295, Cys-294–Cys-357, Cys-323–Cys-388, and Cys-327–Cys-390.

This sequence belongs to the TGF-beta family. Latency-associated peptide: Homodimer; disulfide-linked. Latency-associated peptide: Interacts with Transforming growth factor beta-1 (TGF-beta-1) chain; interaction is non-covalent and maintains (TGF-beta-1) in a latent state; each Latency-associated peptide (LAP) monomer interacts with TGF-beta-1 in the other monomer. Transforming growth factor beta-1: Homodimer; disulfide-linked. Transforming growth factor beta-1: Interacts with TGF-beta receptors (TGFBR1 and TGFBR2), leading to signal transduction. Post-translationally, transforming growth factor beta-1 proprotein: The precursor proprotein is cleaved in the Golgi apparatus to form Transforming growth factor beta-1 (TGF-beta-1) and Latency-associated peptide (LAP) chains, which remain non-covalently linked, rendering TGF-beta-1 inactive.

Its subcellular location is the secreted. The protein resides in the extracellular space. It localises to the extracellular matrix. Functionally, transforming growth factor beta-1 proprotein: Precursor of the Latency-associated peptide (LAP) and Transforming growth factor beta-1 (TGF-beta-1) chains, which constitute the regulatory and active subunit of TGF-beta-1, respectively. In terms of biological role, required to maintain the Transforming growth factor beta-1 (TGF-beta-1) chain in a latent state during storage in extracellular matrix. Associates non-covalently with TGF-beta-1 and regulates its activation via interaction with 'milieu molecules', such as LTBP1, LRRC32/GARP and LRRC33/NRROS, that control activation of TGF-beta-1. Interaction with integrins (ITGAV:ITGB6 or ITGAV:ITGB8) results in distortion of the Latency-associated peptide chain and subsequent release of the active TGF-beta-1. Its function is as follows. Transforming growth factor beta-1: Multifunctional protein that regulates the growth and differentiation of various cell types and is involved in various processes, such as normal development, immune function, microglia function and responses to neurodegeneration. Activation into mature form follows different steps: following cleavage of the proprotein in the Golgi apparatus, Latency-associated peptide (LAP) and Transforming growth factor beta-1 (TGF-beta-1) chains remain non-covalently linked rendering TGF-beta-1 inactive during storage in extracellular matrix. At the same time, LAP chain interacts with 'milieu molecules', such as LTBP1, LRRC32/GARP and LRRC33/NRROS that control activation of TGF-beta-1 and maintain it in a latent state during storage in extracellular milieus. TGF-beta-1 is released from LAP by integrins (ITGAV:ITGB6 or ITGAV:ITGB8): integrin-binding to LAP stabilizes an alternative conformation of the LAP bowtie tail and results in distortion of the LAP chain and subsequent release of the active TGF-beta-1. Once activated following release of LAP, TGF-beta-1 acts by binding to TGF-beta receptors (TGFBR1 and TGFBR2), which transduce signal. While expressed by many cells types, TGF-beta-1 only has a very localized range of action within cell environment thanks to fine regulation of its activation by Latency-associated peptide chain (LAP) and 'milieu molecules'. Plays an important role in bone remodeling: acts as a potent stimulator of osteoblastic bone formation. Can promote either T-helper 17 cells (Th17) or regulatory T-cells (Treg) lineage differentiation in a concentration-dependent manner. Can induce epithelial-to-mesenchymal transition (EMT) and cell migration in various cell types. This chain is Transforming growth factor beta-1 proprotein (TGFB1), found in Gallus gallus (Chicken).